The chain runs to 471 residues: Eukaryotic translation initiation factor 3 subunit M (471 aa).

A disordered region spans residues 39–61; it reads EISSLLEPLRQQEQSEEEPDRKQ. The 172-residue stretch at 206–377 folds into the PCI domain; sequence DFELAQSHVV…SEFLVHRATY (172 aa). The interval 419–471 is disordered; that stretch reads QAATEEANQGKSGEKGGKGGDRRRNPQHQQQQQQSQPSQPQQPRETELVAGAE. Positions 430 to 442 are enriched in basic and acidic residues; sequence SGEKGGKGGDRRR. Residues 445–461 show a composition bias toward low complexity; sequence QHQQQQQQSQPSQPQQP.

The protein belongs to the eIF-3 subunit M family. As to quaternary structure, component of the eukaryotic translation initiation factor 3 (eIF-3) complex.

The protein localises to the cytoplasm. Functionally, component of the eukaryotic translation initiation factor 3 (eIF-3) complex, which is involved in protein synthesis of a specialized repertoire of mRNAs and, together with other initiation factors, stimulates binding of mRNA and methionyl-tRNAi to the 40S ribosome. The eIF-3 complex specifically targets and initiates translation of a subset of mRNAs involved in cell proliferation. The chain is Eukaryotic translation initiation factor 3 subunit M from Aspergillus clavatus (strain ATCC 1007 / CBS 513.65 / DSM 816 / NCTC 3887 / NRRL 1 / QM 1276 / 107).